The following is a 122-amino-acid chain: Small ribosomal subunit protein uS13 (122 aa).

The disordered stretch occupies residues 99–122; the sequence is RGQRTHTNARTRKGPAKAIAGKKK.

The protein belongs to the universal ribosomal protein uS13 family. In terms of assembly, part of the 30S ribosomal subunit. Forms a loose heterodimer with protein S19. Forms two bridges to the 50S subunit in the 70S ribosome.

Functionally, located at the top of the head of the 30S subunit, it contacts several helices of the 16S rRNA. In the 70S ribosome it contacts the 23S rRNA (bridge B1a) and protein L5 of the 50S subunit (bridge B1b), connecting the 2 subunits; these bridges are implicated in subunit movement. Contacts the tRNAs in the A and P-sites. The sequence is that of Small ribosomal subunit protein uS13 from Sinorhizobium fredii (strain NBRC 101917 / NGR234).